The chain runs to 380 residues: Lipid-A-disaccharide synthase (380 aa).

The protein belongs to the LpxB family.

It carries out the reaction a lipid X + a UDP-2-N,3-O-bis[(3R)-3-hydroxyacyl]-alpha-D-glucosamine = a lipid A disaccharide + UDP + H(+). It participates in bacterial outer membrane biogenesis; LPS lipid A biosynthesis. Functionally, condensation of UDP-2,3-diacylglucosamine and 2,3-diacylglucosamine-1-phosphate to form lipid A disaccharide, a precursor of lipid A, a phosphorylated glycolipid that anchors the lipopolysaccharide to the outer membrane of the cell. The protein is Lipid-A-disaccharide synthase of Francisella tularensis subsp. novicida (strain U112).